Here is a 207-residue protein sequence, read N- to C-terminus: Small ribosomal subunit protein uS4 (207 aa).

One can recognise an S4 RNA-binding domain in the interval 97 to 160 (SRLDNVVYRM…KKQARIVEAL (64 aa)).

Belongs to the universal ribosomal protein uS4 family. Part of the 30S ribosomal subunit. Contacts protein S5. The interaction surface between S4 and S5 is involved in control of translational fidelity.

One of the primary rRNA binding proteins, it binds directly to 16S rRNA where it nucleates assembly of the body of the 30S subunit. Its function is as follows. With S5 and S12 plays an important role in translational accuracy. This is Small ribosomal subunit protein uS4 from Burkholderia mallei (strain NCTC 10247).